The chain runs to 134 residues: Ribosome-binding factor A (134 aa).

Belongs to the RbfA family. In terms of assembly, monomer. Binds 30S ribosomal subunits, but not 50S ribosomal subunits or 70S ribosomes.

The protein resides in the cytoplasm. In terms of biological role, one of several proteins that assist in the late maturation steps of the functional core of the 30S ribosomal subunit. Associates with free 30S ribosomal subunits (but not with 30S subunits that are part of 70S ribosomes or polysomes). Required for efficient processing of 16S rRNA. May interact with the 5'-terminal helix region of 16S rRNA. The protein is Ribosome-binding factor A of Rhizobium etli (strain CIAT 652).